Here is a 276-residue protein sequence, read N- to C-terminus: Molybdenum storage protein subunit alpha (276 aa).

In terms of assembly, octamer consisting of 4 alpha and 4 beta chains.

It is found in the cytoplasm. In terms of biological role, intracellular storage of molybdenum. Binds polyoxomolybdates. Can bind at least 90 molybdenum atoms per protein molecule. This chain is Molybdenum storage protein subunit alpha, found in Azotobacter vinelandii (strain DJ / ATCC BAA-1303).